A 327-amino-acid polypeptide reads, in one-letter code: Lactosylceramide 4-alpha-galactosyltransferase (327 aa).

The DXD motif signature appears at 166 to 168; it reads DTD.

The protein belongs to the glycosyltransferase 32 family.

It is found in the golgi apparatus membrane. It catalyses the reaction a beta-D-Gal-(1-&gt;4)-beta-D-Glc-(1&lt;-&gt;1)-Cer(d18:1(4E)) + UDP-alpha-D-galactose = a globoside Gb3Cer (d18:1(4E)) + UDP + H(+). The enzyme catalyses a beta-D-Gal-(1&lt;-&gt;1')-ceramide + UDP-alpha-D-galactose = alpha-D-Gal-(1-&gt;4)-beta-D-Gal-(1&lt;-&gt;1')-Cer + UDP + H(+). It participates in glycolipid biosynthesis. In terms of biological role, catalyzes the transfer of galactose from UDP-alpha-D-galactose to lactosylceramide/beta-D-galactosyl-(1-&gt;4)-beta-D-glucosyl-(1&lt;-&gt;1)-ceramide(d18:1(4E)) to produce globotriaosylceramide/globoside Gb3Cer (d18:1(4E)). Also able to transfer galactose to galactosylceramide/beta-D-Gal-(1&lt;-&gt;1')-Cer. Globoside Gb3Cer is a glycosphingolipid of the globo serie, one of the major types of neutral root structures of glycosphingolipids, that constitute a significant portion of mammalian cell membranes. The chain is Lactosylceramide 4-alpha-galactosyltransferase (A4GALT) from Gorilla gorilla gorilla (Western lowland gorilla).